The chain runs to 102 residues: Small ribosomal subunit protein uS10 (102 aa).

The protein belongs to the universal ribosomal protein uS10 family. In terms of assembly, part of the 30S ribosomal subunit.

In terms of biological role, involved in the binding of tRNA to the ribosomes. This chain is Small ribosomal subunit protein uS10, found in Bifidobacterium longum (strain DJO10A).